We begin with the raw amino-acid sequence, 297 residues long: Nuclear transcription factor Y subunit B-11 (297 aa).

The segment at 1 to 25 is disordered; sequence MKSRKSYGHLLSPVGSPPLDNESGE. Residues 63 to 69 mediate DNA binding; sequence LPIANVS. The subunit association domain (SAD) stretch occupies residues 90 to 101; sequence VQECVSEFISFV.

Belongs to the NFYB/HAP3 subunit family. Heterotrimeric transcription factor composed of three components, NF-YA, NF-YB and NF-YC. NF-YB and NF-YC must interact and dimerize for NF-YA association and DNA binding. Interacts with NFYC2, NFYC4 and NFYC6. As to expression, expressed in roots, culms, nodes, leaf blades, leaf sheaths and young panicles.

The protein localises to the nucleus. It is found in the cytoplasm. Probable transcription factor involved in the regulation of flowering time under long day (LD) conditions. Functions as a repressor of flowering, independently of HD1 and GHD7. Controls flowering time by negatively regulating the expression of EHD1 and HD3A. Regulates plant height by promoting cell elongation in the internodes. Component of the NF-Y/HAP transcription factor complex. This Oryza sativa subsp. japonica (Rice) protein is Nuclear transcription factor Y subunit B-11 (HD5).